The primary structure comprises 524 residues: Maturase K (524 aa).

The protein belongs to the intron maturase 2 family. MatK subfamily.

It is found in the plastid. It localises to the chloroplast. Its function is as follows. Usually encoded in the trnK tRNA gene intron. Probably assists in splicing its own and other chloroplast group II introns. This Welwitschia mirabilis (Tree tumbo) protein is Maturase K.